A 606-amino-acid chain; its full sequence is Methionine--tRNA ligase (606 aa).

The 'HIGH' region motif lies at 14-24 (PYANGPRHIGH). Residues cysteine 146, cysteine 149, cysteine 159, and cysteine 162 each coordinate Zn(2+). The short motif at 351-355 (KFSSS) is the 'KMSKS' region element. Serine 354 is a binding site for ATP.

Belongs to the class-I aminoacyl-tRNA synthetase family. MetG type 1 subfamily. Monomer. The cofactor is Zn(2+).

The protein resides in the cytoplasm. The catalysed reaction is tRNA(Met) + L-methionine + ATP = L-methionyl-tRNA(Met) + AMP + diphosphate. Functionally, is required not only for elongation of protein synthesis but also for the initiation of all mRNA translation through initiator tRNA(fMet) aminoacylation. The polypeptide is Methionine--tRNA ligase (Thermobifida fusca (strain YX)).